We begin with the raw amino-acid sequence, 575 residues long: Muellerian-inhibiting factor (575 aa).

An N-terminal signal peptide occupies residues 1–24 (MPGPSLSLALVLSAMGALLRPGTP). Residues 25-466 (REEVFSTSAL…ERSGSARAQR (442 aa)) constitute a propeptide that is removed on maturation. N-linked (GlcNAc...) asparagine glycosylation is found at asparagine 78 and asparagine 344. 3 disulfides stabilise this stretch: cysteine 477–cysteine 541, cysteine 503–cysteine 572, and cysteine 507–cysteine 574.

This sequence belongs to the TGF-beta family. As to quaternary structure, homodimer; disulfide-linked. Post-translationally, preproprotein is proteolytically processed to generate N- and C-terminal cleavage products that homodimerize and associate to form a biologically active non-covalent complex. Binding of the non-covalent complex to AMHR2 induces dissociation of the pro-region from the mature C-terminal dimer. The N-terminal portion of the protein, despite having no intrinsic activity, has the role of amplifying the activity of the C-terminus. In terms of tissue distribution, expressed in fetal testis and adult ovaries.

Its subcellular location is the secreted. In terms of biological role, plays an important role in several reproductive functions. Induces Muellerian duct regression during male fetal sexual differentiation and plays a role in Leydig cell differentiation and function. In female acts as a negative regulator of the primordial to primary follicle transition and decreases FSH sensitivity of growing follicles. AMH signals by binding to a specific type-II receptor, AMHR2, that heterodimerizes with type-I receptors (ACVR1 and BMPR1A), and recruiting SMAD proteins that are translocated to the nucleus to regulate target gene expression. This Bos taurus (Bovine) protein is Muellerian-inhibiting factor (AMH).